The primary structure comprises 185 residues: Capsid protein (185 aa).

The segment at 136–185 (NAPILSTLPETTVVRRRDRGRSPRRRTPSPRRRRSQSPRRRRSQSRESQC) is disordered. A compositionally biased stretch (basic residues) spans 149-178 (VRRRDRGRSPRRRTPSPRRRRSQSPRRRRS). Phosphoserine; by host is present on residues Ser157, Ser164, and Ser172. A 1; half-length repeat occupies 157-163 (SPRRRTP). The interval 157 to 179 (SPRRRTPSPRRRRSQSPRRRRSQ) is 3 X 8 AA repeats of S-P-R-R-R-[PR]-S-Q. Positions 160 to 177 (RRTPSPRRRRSQSPRRRR) match the Bipartite nuclear localization signal motif. 2 tandem repeats follow at residues 164-171 (SPRRRRSQ) and 172-179 (SPRRRRSQ). The RNA binding stretch occupies residues 179–185 (QSRESQC).

This sequence belongs to the orthohepadnavirus core antigen family. Homodimerizes, then multimerizes. Interacts with cytosol exposed regions of viral L glycoprotein present in the reticulum-to-Golgi compartment. Interacts with human FLNB. Phosphorylated form interacts with host importin alpha; this interaction depends on the exposure of the NLS, which itself depends upon genome maturation and/or phosphorylation of the capsid protein. Interacts with host NUP153. Phosphorylated by host SRPK1, SRPK2, and maybe protein kinase C or GAPDH. Phosphorylation is critical for pregenomic RNA packaging. Protein kinase C phosphorylation is stimulated by HBx protein and may play a role in transport of the viral genome to the nucleus at the late step during the viral replication cycle.

It is found in the virion. The protein resides in the host cytoplasm. Self assembles to form an icosahedral capsid. Most capsids appear to be large particles with an icosahedral symmetry of T=4 and consist of 240 copies of capsid protein, though a fraction forms smaller T=3 particles consisting of 180 capsid proteins. Entering capsids are transported along microtubules to the nucleus. Phosphorylation of the capsid is thought to induce exposure of nuclear localization signal in the C-terminal portion of the capsid protein that allows binding to the nuclear pore complex via the importin (karyopherin-) alpha and beta. Capsids are imported in intact form through the nuclear pore into the nuclear basket, where it probably binds NUP153. Only capsids that contain the mature viral genome can release the viral DNA and capsid protein into the nucleoplasm. Immature capsids get stuck in the basket. Capsids encapsulate the pre-genomic RNA and the P protein. Pre-genomic RNA is reverse-transcribed into DNA while the capsid is still in the cytoplasm. The capsid can then either be directed to the nucleus, providing more genomes for transcription, or bud through the endoplasmic reticulum to provide new virions. The polypeptide is Capsid protein (Hepatitis B virus genotype A1 subtype adw (isolate Philippines/pFDW294/1988) (HBV-A)).